Reading from the N-terminus, the 305-residue chain is Uridylate-specific endoribonuclease D (305 aa).

The first 17 residues, 1 to 17 (MKVYFVFLCLLPSLISG), serve as a signal peptide directing secretion. The 273-residue stretch at 33-305 (SNAEIQSLAE…RYVASSYPNI (273 aa)) folds into the EndoU domain. Catalysis depends on residues His182, His197, and Lys240. Asn288 carries an N-linked (GlcNAc...) asparagine glycan.

It belongs to the ENDOU family. As to quaternary structure, monomer. It depends on Mn(2+) as a cofactor.

It localises to the secreted. The catalysed reaction is ribonucleotidyl-uridine-RNA = a 5'-end dephospho-uridine-RNA + a 3'-end 2',3'-cyclophospho-ribonucleotide-RNA. Functionally, endoribonuclease that cleaves single-stranded RNAs at 5' of uridylates and releases a product with a 2',3'-cyclic phosphate at the 3'-end. In Xenopus laevis (African clawed frog), this protein is Uridylate-specific endoribonuclease D (endou-d).